Here is a 52-residue protein sequence, read N- to C-terminus: MSTQYTYEQIAEDFRLWGEYMDPNAEMTEEEFQALSTEEKVAMQVEAFGAEA.

In terms of biological role, allows the phage to evade the CRISPR/Cas system type I-E. Prevents the DNA-binding activity of the CRISPR-Cas complex. This is Anti-CRISPR protein 31 from Pseudomonas aeruginosa (Bacteriophage D3112).